A 754-amino-acid polypeptide reads, in one-letter code: MNEDLPKEYFELIRKALNEKEAEKAPLSRRRRVRRKNQPLPDAKKKFKTGLNELPRESVVTVNLDSSDDGVVTVPTDDSVEEIQSSEEDYDSEEFEDVTDGNEVAGVEDISVEIKPSSKRNSDARRTSRNVCSNEERKRRKYFHMLYLVCLMVHGFIRNEWINSKRLSRKLSNLVPEKVFELLHPQKDEELPLRSTRKLLDGLKKCMELWQKHWKITKKYDNVGLYMRTWKEIEMSANNKRKFKTLKRSDFLRAVSKGHGDPDISVQGFVAMLRACNVNARLIMSCQPPDFTNMKIDTSLNGNNAYKDMVKYPIFWCEVWDKFSKKWITVDPVNLKTIEQVRLHSKLAPKGVACCERNMLRYVIAYDRKYGCRDVTRRYAQWMNSKVRKRRITKDDFGEKWFRKVITALHHRKRTKIDDYEDQYFFQRDESEGIPDSVQDLKNHPYYVLEQDIKQTQIVKPGCKECGYLKVHGKVGKVLKVYAKRDIADLKSARQWYMNGRILKTGSRCKKVIKRTVGRPKGEAEEEDERLYSFEDTELYIPPLASASGEITKNTFGNIEVFAPTMIPGNCCLVENPVAIKAARFLGVEFAPAVTSFKFERGSTVKPVLSGIVVAKWLREAIETAIDGIEFIQEDDNRKEHLLGALESWNTLLLKLRIRSKLNSTYGKIAEEEPNVTKEQNIADNHDNTETFMGGGFLPGIANHEARPYSEPSEPEDSLDYVSVDKAEESATDDDVGEDYSDFMKELEMSEESD.

The tract at residues 23–51 (EKAPLSRRRRVRRKNQPLPDAKKKFKTGL) is disordered. Over residues 27-37 (LSRRRRVRRKN) the composition is skewed to basic residues. Residues 250-269 (DFLRAVSKGHGDPDISVQGF) mediate DNA binding. The interval 701–754 (IANHEARPYSEPSEPEDSLDYVSVDKAEESATDDDVGEDYSDFMKELEMSEESD) is disordered. A compositionally biased stretch (acidic residues) spans 730–741 (SATDDDVGEDYS).

This sequence belongs to the XPC family.

It localises to the cytoplasm. The protein localises to the nucleus. Involved in nucleotide excision repair of DNA damaged with UV light, bulky adducts, or cross-linking agents. The protein is DNA repair protein RAD4 (RAD4) of Saccharomyces cerevisiae (strain ATCC 204508 / S288c) (Baker's yeast).